The chain runs to 428 residues: Serine--tRNA ligase (428 aa).

Residue 235–237 (TAE) coordinates L-serine. Residue 266-268 (RSE) coordinates ATP. E289 provides a ligand contact to L-serine. 353-356 (EISS) lines the ATP pocket. S389 serves as a coordination point for L-serine.

The protein belongs to the class-II aminoacyl-tRNA synthetase family. Type-1 seryl-tRNA synthetase subfamily. Homodimer. The tRNA molecule binds across the dimer.

Its subcellular location is the cytoplasm. The catalysed reaction is tRNA(Ser) + L-serine + ATP = L-seryl-tRNA(Ser) + AMP + diphosphate + H(+). The enzyme catalyses tRNA(Sec) + L-serine + ATP = L-seryl-tRNA(Sec) + AMP + diphosphate + H(+). Its pathway is aminoacyl-tRNA biosynthesis; selenocysteinyl-tRNA(Sec) biosynthesis; L-seryl-tRNA(Sec) from L-serine and tRNA(Sec): step 1/1. In terms of biological role, catalyzes the attachment of serine to tRNA(Ser). Is also able to aminoacylate tRNA(Sec) with serine, to form the misacylated tRNA L-seryl-tRNA(Sec), which will be further converted into selenocysteinyl-tRNA(Sec). The sequence is that of Serine--tRNA ligase from Pasteurella multocida (strain Pm70).